Consider the following 224-residue polypeptide: Serum amyloid P-component (224 aa).

The N-terminal stretch at 1 to 19 (MERLLLWVSVLASLPEAFA) is a signal peptide. One can recognise a Pentraxin (PTX) domain in the interval 24–224 (TGKVFVFPRE…YVVIKPRVWS (201 aa)). Residue Asn51 is glycosylated (N-linked (GlcNAc...) asparagine). Residues Cys55 and Cys114 are joined by a disulfide bond. Residues Asp77, Asn78, Glu155, Gln156, Asp157, and Gln167 each coordinate Ca(2+).

It belongs to the pentraxin family. In terms of assembly, homopentamer. Pentraxin (or pentaxin) have a discoid arrangement of 5 non-covalently bound subunits. The cofactor is Ca(2+).

The protein localises to the secreted. This chain is Serum amyloid P-component (APCS), found in Sus scrofa (Pig).